The sequence spans 363 residues: Spindle pole body component SPC42 (363 aa).

Residues 60–137 (EFINKAVQQN…ANSTFKEMRF (78 aa)) adopt a coiled-coil conformation. The interval 160 to 184 (PKHRAPDATGNPRTTNKVSNTSDQD) is disordered. A compositionally biased stretch (polar residues) spans 170 to 182 (NPRTTNKVSNTSD). S213, S217, S284, and S329 each carry phosphoserine. Positions 249–298 (DIMMYESAELKRVEEEIEELKRKILVRKKHDLRKLSLNNQLQELQSMMDG) form a coiled coil. Residues 310-363 (HNHATHRHSSQSSRDYSPSSDACLECSNDLYEKNRVKPENNMSETFATPTPNNR) are disordered. A compositionally biased stretch (low complexity) spans 319–329 (SQSSRDYSPSS). Residues 349–363 (NNMSETFATPTPNNR) show a composition bias toward polar residues.

The protein belongs to the SPC42 family. Component of the SPC110 complex containing at least CMD1, SPC29, SPC42 and SCP110.

The protein localises to the nucleus. Its subcellular location is the cytoplasm. It localises to the cytoskeleton. It is found in the microtubule organizing center. The protein resides in the spindle pole body. In terms of biological role, forms a polymeric layer at the periphery of the spindle pole body (SPB) central plaque which has an essential function during SPB duplication and may facilitate attachment of the SPB to the nuclear membrane. This is Spindle pole body component SPC42 (SPC42) from Saccharomyces cerevisiae (strain ATCC 204508 / S288c) (Baker's yeast).